The following is a 253-amino-acid chain: Zinc finger protein JAGGED (253 aa).

Positions 1-46 are disordered; it reads MRHEENYLDLNNLPDDFSKDGNKQALEEGSSSGQRKKKGSKEGKDE. Over residues 16 to 26 the composition is skewed to basic and acidic residues; it reads DFSKDGNKQAL. The C2H2-type zinc-finger motif lies at 51 to 73; the sequence is YECRFCSLKFCKSQALGGHMNRH.

In terms of assembly, interacts with GATA18/HAN. As to expression, expressed in the emerging leaf, sepal, petal, stamen and carpel primordia. Not expressed in the apical shoot meristem (SAM).

It localises to the nucleus. Its function is as follows. Controls the morphogenesis of lateral organs. Functions in lateral organ shape and is sufficient to induce proliferation and growth of lateral organ tissue. Is necessary and sufficient for bract formation, but its expression is excluded from the cryptic bract, which could be a cause of bractless flowers in Arabidopsis. Participates with FIL and YAB3 in regulating valve margin development. Functions with JGL to define stamen and carpel shape. Functions with AS1 and AS2 in the sepal and petal primordia to repress boundary-specifying genes for normal development of the organs. This is Zinc finger protein JAGGED (JAG) from Arabidopsis thaliana (Mouse-ear cress).